We begin with the raw amino-acid sequence, 775 residues long: DNA polymerase (775 aa).

The protein belongs to the DNA polymerase type-B family. As to quaternary structure, monomer.

It carries out the reaction DNA(n) + a 2'-deoxyribonucleoside 5'-triphosphate = DNA(n+1) + diphosphate. In terms of biological role, in addition to polymerase activity, this DNA polymerase exhibits 3' to 5' exonuclease activity. The chain is DNA polymerase (pol) from Pyrococcus glycovorans.